A 295-amino-acid chain; its full sequence is Phosphoenolpyruvate phosphomutase (295 aa).

Asp58 functions as the Nucleophile in the catalytic mechanism. Asp58 serves as a coordination point for Mg(2+).

Belongs to the isocitrate lyase/PEP mutase superfamily. PEP mutase family. In terms of assembly, homotetramer. Mg(2+) is required as a cofactor.

The enzyme catalyses phosphoenolpyruvate + H(+) = 3-phosphonopyruvate. Its pathway is phosphorus metabolism; phosphonate biosynthesis. In terms of biological role, formation of a carbon-phosphorus bond by converting phosphoenolpyruvate (PEP) to phosphonopyruvate (P-Pyr). In Mytilus edulis (Blue mussel), this protein is Phosphoenolpyruvate phosphomutase.